A 452-amino-acid chain; its full sequence is Nuclear distribution protein PAC1 (452 aa).

Positions 12–44 constitute a LisH domain; it reads QKDELHKAILAYFSASGLSNTGAALREELGVGD. A coiled-coil region spans residues 64 to 91; it reads TGVLRLQKKIMELESRLSSLQSELDSAT. WD repeat units lie at residues 117–158, 160–200, 204–245, 248–287, 290–350, 352–391, 396–435, and 437–452; these read SHRN…RTVK, HTKA…KNIR, GHDH…CVKT, GHSD…HKAT, GHEH…LKTL, GHDN…RCVK, AHSH…INVR, and VIAT…VFAS.

The protein belongs to the WD repeat LIS1/nudF family. Self-associates. Interacts with NDL1 and dynein.

Its subcellular location is the cytoplasm. The protein resides in the cytoskeleton. It is found in the spindle pole. Functionally, positively regulates the activity of the minus-end directed microtubule motor protein dynein. May enhance dynein-mediated microtubule sliding by targeting dynein to the microtubule plus end. Required for nuclear migration during vegetative growth as well as development. Required for retrograde early endosome (EE) transport from the hyphal tip. Required for localization of dynein to the mitotic spindle poles. Recruits additional proteins to the dynein complex at SPBs. The protein is Nuclear distribution protein PAC1 of Tuber melanosporum (strain Mel28) (Perigord black truffle).